We begin with the raw amino-acid sequence, 169 residues long: METGPSEEPSGRKESQEMCPPGLLVFAGSSEQDANLAKQFWISASMYPPSESQLVLRRDSSQRLPVARPRRSRGSENSHSSQSFHLASNKNRDIFAEALKIQESEEKVKYLQKAKTREEILQLLRKQREERISKELISLPYKPKAKEHKAKKVVSESDKEDQEEVKTLD.

Disordered stretches follow at residues 1–21 (METG…MCPP), 52–89 (SQLV…LASN), and 144–169 (KAKE…KTLD). A compositionally biased stretch (polar residues) spans 75–89 (SENSHSSQSFHLASN).

This sequence belongs to the HOATZ family.

The protein localises to the cytoplasm. It is found in the cell projection. Its subcellular location is the cilium. Functionally, required for motile ciliogenesis and flagellar genesis by mediating the maturation of the glycolytic enzyme ENO4. This Homo sapiens (Human) protein is Cilia- and flagella-associated protein HOATZ.